A 115-amino-acid chain; its full sequence is Large ribosomal subunit protein uL22 (115 aa).

It belongs to the universal ribosomal protein uL22 family. In terms of assembly, part of the 50S ribosomal subunit.

This protein binds specifically to 23S rRNA; its binding is stimulated by other ribosomal proteins, e.g. L4, L17, and L20. It is important during the early stages of 50S assembly. It makes multiple contacts with different domains of the 23S rRNA in the assembled 50S subunit and ribosome. Its function is as follows. The globular domain of the protein is located near the polypeptide exit tunnel on the outside of the subunit, while an extended beta-hairpin is found that lines the wall of the exit tunnel in the center of the 70S ribosome. This chain is Large ribosomal subunit protein uL22, found in Lactococcus lactis subsp. lactis (strain IL1403) (Streptococcus lactis).